Here is a 397-residue protein sequence, read N- to C-terminus: ATP-dependent RNA helicase eIF4A (397 aa).

Positions 24–52 match the Q motif motif; sequence DSFDDMNLKSELLRGIYAYGFERPSAIQQ. A Helicase ATP-binding domain is found at 55-225; that stretch reads IMPVIKGHDV…TKFMRDPVRI (171 aa). Residue 68–75 participates in ATP binding; that stretch reads AQSGTGKT. The DEAD box signature appears at 173-176; sequence DEAD. One can recognise a Helicase C-terminal domain in the interval 236–397; that stretch reads GIKQFYIAVE…EMPMNVADLI (162 aa).

Belongs to the DEAD box helicase family. eIF4A subfamily. In terms of assembly, component of the eIF4F complex, which composition varies with external and internal environmental conditions. It is composed of at least eIF4A, eIF4E and eIF4G.

The protein localises to the cytoplasm. It catalyses the reaction ATP + H2O = ADP + phosphate + H(+). In terms of biological role, ATP-dependent RNA helicase which is a subunit of the eIF4F complex involved in cap recognition and is required for mRNA binding to ribosome. In the current model of translation initiation, eIF4A unwinds RNA secondary structures in the 5'-UTR of mRNAs which is necessary to allow efficient binding of the small ribosomal subunit, and subsequent scanning for the initiator codon. In Chaetomium globosum (strain ATCC 6205 / CBS 148.51 / DSM 1962 / NBRC 6347 / NRRL 1970) (Soil fungus), this protein is ATP-dependent RNA helicase eIF4A (TIF1).